A 257-amino-acid polypeptide reads, in one-letter code: Adenosylcobinamide-GDP ribazoletransferase (257 aa).

The next 6 membrane-spanning stretches (helical) occupy residues 7 to 27 (QLTLFFIAMGFFTRIPMPTWV), 39 to 59 (RYFGLIGLLVGGICALVYEIT), 61 to 81 (GFLPVSVSIIFAMIAGLVVTG), 113 to 133 (IGTYGALALVMGLMLKFILLS), 143 to 163 (VVTALIVGHTLSRVMAASLIF), and 196 to 216 (VLVLWCSGLSGGLYIAIGLVL).

It belongs to the CobS family. It depends on Mg(2+) as a cofactor.

Its subcellular location is the cell inner membrane. It carries out the reaction alpha-ribazole + adenosylcob(III)inamide-GDP = adenosylcob(III)alamin + GMP + H(+). The catalysed reaction is alpha-ribazole 5'-phosphate + adenosylcob(III)inamide-GDP = adenosylcob(III)alamin 5'-phosphate + GMP + H(+). Its pathway is cofactor biosynthesis; adenosylcobalamin biosynthesis; adenosylcobalamin from cob(II)yrinate a,c-diamide: step 7/7. In terms of biological role, joins adenosylcobinamide-GDP and alpha-ribazole to generate adenosylcobalamin (Ado-cobalamin). Also synthesizes adenosylcobalamin 5'-phosphate from adenosylcobinamide-GDP and alpha-ribazole 5'-phosphate. This is Adenosylcobinamide-GDP ribazoletransferase from Shewanella woodyi (strain ATCC 51908 / MS32).